A 376-amino-acid polypeptide reads, in one-letter code: Methionine import ATP-binding protein MetN 1 (376 aa).

Positions 34 to 273 (VRFINLGKTY…PQHEVSKTLL (240 aa)) constitute an ABC transporter domain. 70–77 (GRSGAGKS) is an ATP binding site.

The protein belongs to the ABC transporter superfamily. Methionine importer (TC 3.A.1.24) family. The complex is composed of two ATP-binding proteins (MetN), two transmembrane proteins (MetI) and a solute-binding protein (MetQ).

It localises to the cell inner membrane. It carries out the reaction L-methionine(out) + ATP + H2O = L-methionine(in) + ADP + phosphate + H(+). It catalyses the reaction D-methionine(out) + ATP + H2O = D-methionine(in) + ADP + phosphate + H(+). In terms of biological role, part of the ABC transporter complex MetNIQ involved in methionine import. Responsible for energy coupling to the transport system. The chain is Methionine import ATP-binding protein MetN 1 from Pseudomonas syringae pv. tomato (strain ATCC BAA-871 / DC3000).